The following is a 545-amino-acid chain: Solute carrier family 22 member 6 (545 aa).

Residues 1–9 are Cytoplasmic-facing; the sequence is MAFNDLLKQ. Residues 10 to 30 traverse the membrane as a helical segment; it reads VGGVGRFQLIQVTMVVAPLLL. Residues 31 to 129 are Extracellular-facing; sequence MASHNTLQNF…LVCSHRAFRQ (99 aa). Residues Asn-39, Asn-56, Asn-86, Asn-91, and Asn-107 are each glycosylated (N-linked (GlcNAc...) asparagine). A helical transmembrane segment spans residues 130–150; the sequence is LAQSLFMVGVLLGAMMFGYLA. The Cytoplasmic portion of the chain corresponds to 151–157; the sequence is DRLGRRK. Residues 158 to 177 traverse the membrane as a helical segment; it reads VLILNYLQTAVSGTCAAYAP. Asn-178 is a glycosylation site (N-linked (GlcNAc...) asparagine). Residues 178–180 lie on the Extracellular side of the membrane; that stretch reads NYT. Residues 181 to 201 traverse the membrane as a helical segment; it reads VYCIFRLLSGMSLASIAINCM. The Cytoplasmic portion of the chain corresponds to 202–218; that stretch reads TLNMEWMPIHTRAYVGT. A helical transmembrane segment spans residues 219-239; that stretch reads LIGYVYSLGQFLLAGIAYAVP. Residues 240-242 lie on the Extracellular side of the membrane; the sequence is HWR. A helical membrane pass occupies residues 243-263; the sequence is HLQLAVSVPFFVAFIYSWFFI. Over 264–331 the chain is Cytoplasmic; that stretch reads ESARWYSSSG…ELLRCPTLRR (68 aa). The chain crosses the membrane as a helical span at residues 332–352; it reads LFLCLSMLWFATSFAYYGLVM. Residues 353–362 lie on the Extracellular side of the membrane; it reads DLQGFGVSMY. The chain crosses the membrane as a helical span at residues 363 to 383; sequence LIQVIFGAVDLPAKFVCFLVI. Residues 384 to 389 are Cytoplasmic-facing; the sequence is NSMGRR. A helical membrane pass occupies residues 390 to 410; sequence PAQLASLLLAGICILVNGIIP. The Extracellular segment spans residues 411 to 419; it reads RGHTIIRTS. The chain crosses the membrane as a helical span at residues 420–440; sequence LAVLGKGCLASSFNCIFLYTG. The Cytoplasmic segment spans residues 441–450; sequence ELYPTMIRQT. Residues 451-471 traverse the membrane as a helical segment; that stretch reads GLGMGSTMARVGSIVSPLISM. Over 472–478 the chain is Extracellular; sequence TAEFYPS. Residues 479–499 traverse the membrane as a helical segment; that stretch reads IPLFIFGAVPVAASAVTALLP. The Cytoplasmic portion of the chain corresponds to 500-545; it reads ETLGQPLPDTVQDLKSRSRGKQKQQQLEQQKQMIPLQVSTQEKNGL. Positions 515–545 are disordered; sequence SRSRGKQKQQQLEQQKQMIPLQVSTQEKNGL. The span at 522 to 531 shows a compositional bias: low complexity; that stretch reads KQQQLEQQKQ. Positions 536–545 are enriched in polar residues; that stretch reads QVSTQEKNGL.

It belongs to the major facilitator (TC 2.A.1) superfamily. Organic cation transporter (TC 2.A.1.19) family. In terms of processing, glycosylated. Glycosylation is necessary for proper targeting of the transporter to the plasma membrane. As to expression, expressed in kidney. In kidney, restricted to the proximal convoluted tubule (representing S1 and S2 segments). In brain, expressed in neurons of the cortex cerebri and hippocampus as well as in the ependymal cell layer of the choroid plexus.

It is found in the basolateral cell membrane. It localises to the basal cell membrane. It carries out the reaction (6R)-L-erythro-5,6,7,8-tetrahydrobiopterin(out) + a dicarboxylate(in) = (6R)-L-erythro-5,6,7,8-tetrahydrobiopterin(in) + a dicarboxylate(out). The catalysed reaction is L-erythro-7,8-dihydrobiopterin(out) + a dicarboxylate(in) = L-erythro-7,8-dihydrobiopterin(in) + a dicarboxylate(out). It catalyses the reaction L-sepiapterin(out) + a dicarboxylate(in) = L-sepiapterin(in) + a dicarboxylate(out). The enzyme catalyses prostaglandin F2alpha(out) + a dicarboxylate(in) = prostaglandin F2alpha(in) + a dicarboxylate(out). It carries out the reaction prostaglandin E2(out) + a dicarboxylate(in) = prostaglandin E2(in) + a dicarboxylate(out). The catalysed reaction is 3',5'-cyclic AMP(out) + a dicarboxylate(in) = 3',5'-cyclic AMP(in) + a dicarboxylate(out). It catalyses the reaction 3',5'-cyclic GMP(out) + a dicarboxylate(in) = 3',5'-cyclic GMP(in) + a dicarboxylate(out). The enzyme catalyses urate(out) + a dicarboxylate(in) = urate(in) + a dicarboxylate(out). It carries out the reaction kynurenate(out) + glutarate(in) = kynurenate(in) + glutarate(out). The catalysed reaction is (indol-3-yl)acetate(out) + a dicarboxylate(in) = (indol-3-yl)acetate(in) + a dicarboxylate(out). It catalyses the reaction indoxyl sulfate(out) + a dicarboxylate(in) = indoxyl sulfate(in) + a dicarboxylate(out). The enzyme catalyses N-benzoylglycine(out) + a dicarboxylate(in) = N-benzoylglycine(in) + a dicarboxylate(out). It carries out the reaction 3-carboxy-4-methyl-5-propyl-2-furanpropanoate(out) + a dicarboxylate(in) = 3-carboxy-4-methyl-5-propyl-2-furanpropanoate(in) + a dicarboxylate(out). Functionally, secondary active transporter that functions as a Na(+)-independent organic anion (OA)/dicarboxylate antiporter where the uptake of one molecule of OA into the cell is coupled with an efflux of one molecule of intracellular dicarboxylate such as 2-oxoglutarate or glutarate. Mediates the uptake of OA across the basolateral side of proximal tubule epithelial cells, thereby contributing to the renal elimination of endogenous OA from the systemic circulation into the urine. Functions as a biopterin transporters involved in the uptake and the secretion of coenzymes tetrahydrobiopterin (BH4), dihydrobiopterin (BH2) and sepiapterin to urine, thereby determining baseline levels of blood biopterins. Transports prostaglandin E2 (PGE2) and prostaglandin F2-alpha (PGF2-alpha) and may contribute to their renal excretion. Involved in the transport of neuroactive tryptophan metabolites kynurenate (KYNA) and xanthurenate (XA). May transport glutamate. Also involved in the disposition of uremic toxins and potentially toxic xenobiotics by the renal organic anion secretory pathway, helping reduce their undesired toxicological effects on the body. Uremic toxins include the indoxyl sulfate (IS), hippurate/N-benzoylglycine (HA), indole acetate (IA) and 3-carboxy-4- methyl-5-propyl-2-furanpropionate(CMPF) and urate. Xenobiotics include the mycotoxin ochratoxin (OTA). May also contribute to the transport of organic compounds in testes across the blood-testis-barrier. The chain is Solute carrier family 22 member 6 from Mus musculus (Mouse).